The sequence spans 897 residues: Schlafen family member 13 (897 aa).

The interval 2-355 (EANHCSLGVY…WVEKMMDADP (354 aa)) is n'-domain region. Catalysis depends on residues Glu-208 and Glu-213. Residues His-284, Cys-286, and Cys-321 each coordinate Zn(2+). 599–606 (GLPGSGKT) is a binding site for ATP.

Belongs to the Schlafen family. Subgroup III subfamily. Mg(2+) is required as a cofactor.

Its subcellular location is the cytoplasm. Functionally, endoribonuclease that cleaves tRNAs and rRNAs. Cleaves tRNAs 11 nucleotides from the 3'-terminus at the acceptor stem. Does not act on tRNA(Sec). Able to restrict HIV-1 virus replication; ability to inhibit HIV-1 replication is dependent on endoribonuclease activity. In Homo sapiens (Human), this protein is Schlafen family member 13.